A 302-amino-acid polypeptide reads, in one-letter code: Sulfate adenylyltransferase subunit 2 (302 aa).

Positions 280-302 (RQGRLIDSDQSASMEQKKRQGYF) are disordered.

Belongs to the PAPS reductase family. CysD subfamily. Heterodimer composed of CysD, the smaller subunit, and CysN.

The catalysed reaction is sulfate + ATP + H(+) = adenosine 5'-phosphosulfate + diphosphate. Its pathway is sulfur metabolism; hydrogen sulfide biosynthesis; sulfite from sulfate: step 1/3. In terms of biological role, with CysN forms the ATP sulfurylase (ATPS) that catalyzes the adenylation of sulfate producing adenosine 5'-phosphosulfate (APS) and diphosphate, the first enzymatic step in sulfur assimilation pathway. APS synthesis involves the formation of a high-energy phosphoric-sulfuric acid anhydride bond driven by GTP hydrolysis by CysN coupled to ATP hydrolysis by CysD. This Shewanella sp. (strain ANA-3) protein is Sulfate adenylyltransferase subunit 2.